A 3412-amino-acid polypeptide reads, in one-letter code: MSKKPGKPGRNRVVNMLKRGVSRVNPLTGLKRILGSLLDGRGPVRFILAILTFFRFTALQPTEALKRRWRAVDKRTALKHLNGFKRDLGSMLDTINRRPSKKRGGTRSLLGLAALIGLASSLQLSTYQGKVLMSINKTDAQSAINIPSANGANTCIVRALDVGVMCKNDITYLCPVLSAGNDPEDIDCWCDVEEVWVHYGRCTRMGHSRRSRRSISVQHHGDSTLATKNTPWLDTVKTTKYLTKVENWVLRNPGYALVALAIGWMLGSNNTQRVVFVIMLMLIAPAYSFNCLGTSNRDFVEGASGATWIDLVLEGGSCVTVMAPEKPTLDFKVMKMEATELATVREYCYEATLDTLSTVARCPTTGEAHNTKRSDPTFVCKRDVVDRGWGNGCGLFGKGSIDTCAKFTCKNKATGKTILRENIKYEVAIFVHGSTDSTSHGNYFEQIGKNQAARFTISPQAPSFTANMGEYGTVTIDCEARSGINTEDYYVFTVKEKSWLVNRDWFHDLNLPWTSPATTDWRNRETLVEFEEPHATKQTVVALGSQEGALHTALAGAIPATVSSSTLTLQSGHLKCRAKLDKVKIKGTTYGMCDSAFTFSKNPADTGHGTVIVELQYTGSNGPCRVPISVTANLMDLTPVGRLVTVNPFISTGGANNKVMIEVEPPFGDSYIVVGRGTTQINYHWHKEGSSIGKALATTWKGAQRLAVLGDTAWDFGSIGGVFNSIGKAVHQVFGGAFRTLFGGMSWITQGLLGALLLWMGLQARDRSISLTLLAVGGILIFLATSVQADSGCAIDLQRRELKCGGGIFVYNDVEKWKSDYKYFPLTPTGLAHVIQEAHANGICGIRSTSRLEHLMWENIQRELNAIFEDNEIDLSVVVQEDPKYYKRAPRRLKKLEDELDYGWKKWGKTLFVEPRLGNNTFVVDGPETKECPTANRAWNSFKVEDFGFGMVFTRLWLTIREENTTECDSAIIGTAIKGDRAVHSDLSYWIESKKNETWQLERAVMGEVKSCTWPETHTLWGDGVVESEMIIPVTLGGPKSHHNKRNGYHTQTKGPWSEGEITLDFDYCPGTTVTVTEHCGNRGASLRTTTASGKLVTDWCCRSCSLPPLRYTTKDGCWYGMEIRPVKEEEAKLVKSRVTAGVAGGMEPFQLGLLVAFIATQEVLKRRWTGKLTLTSLAVCLALLIFGNLTYMDLVRYLVLVGTAFAEMNTGGDVIHLALVAVFKVQPAFLAGLFLRMQWSNQENILMVIGAAFLQMAANDLKLEVLPILNAMSIAWMLIRAMKEGKVAMYALPILCALTPGMRMAGLDVIRCLLLIIGIVTLLNERRESVAKKKGGYLLAAALCQAGVCSPLIMMGGLILAHPNGKRSWPASEVLTGVGLMCALAGGLLEFEETSMVVPFAIAGLMYITYTVSGKAAEMWIEKAADITWEQNAEITGTSPRLDVDLDSHGNFKLLNDPGAPVHLFALRFILLGLSARFHWFIPFGVLGFWLLGKHSKRGGALWDVPSPKVYPKCETKPGIYRIMTRGILGTFQAGVGVMHEGVFHTMWHATEGAVLRNGEGRLDPYAGDVRNDLISYGGPWKLSATWDGTEEVQMIAVAPGKPAINVQTTPGVFKTPFGTIGAVTLDFPKGTSGSPIINKKGEIIGLYGNGVLIGQGEYVSGIIQGERTEEPIPDAYNEEMLRKRKLTVLELHPGAGKTRKVLPQIIKDCIQKRLRTAVLAPTRVVACEIAEALKGLPIRYLTPAVRNEHQGNEIVDVMCHATLTQKLLTPTRVPNYQVYIMDEAHFIDPASIAARGYISTKVELGEAAAIFMTATPPGTNDPFPDSNSPILDVEAQVPDKAWSTGYEWITNFTGRTVWFVPSVKSGNEIAICLQKAGKRVIQLNRKSFDTEYPKTKNNEWDFVVTTDISEMGANFGAHRVIDSRKCVKPVILEDDDRVILNGPMAITSASAAQRRGRIGRNPSQIGDEYHYGGATNEDDHDLANWTEAKILLDNIYLPNGLVAQMYQPERDKVFTMDGEFRLRGEERKNFVELMRNGDLPVWLAYKVASNGHSYQDRSWCFTGQTNNTILEDNNEVEVFTKTGDRKILRPKWMDARVCCDYQALKSFKEFAAGKRSALGMMEVMGRMPNHFWEKTVAAADTLYLLGTSEANSRAHKEALAELPDSLETLLLIGMLCVMSMGTFIFLMNRKGVGKMGLGAFVMTLATALLWAAEVPGTQIAGVLLIVFLLMIVLIPEPEKQRSQTDNQLAVFLICIMTLMGVVAANEMGLLEKTKSDIAKLFGSQPGSVGFATRTTPWDISLDIKPATAWALYAAATMVMTPLIKHLITTQYVNFSLTAIASQAGVLLGLTNGMPFTAMDLSVPLLVLGCWNQMTLPSLAVAVMLLAIHYAFMIPGWQAEAMRAAQRRTAAGIMKNAVVDGIVATDIPDLSPATPMTEKKMGQILLIAAAVLAVLVRPGICSIKEFGVLGSAALVTLIEGTAGVVWNCTTAVGLCNLMRGGWLAGMSITWTVYKNVDKPKGKRGGGKGATLGEIWKSRLNQLTRAEFMAYRKDGIVEVDRAPARKARREGRLTGGHPVSRGSAKLRWITERGFVKPMGKVVDLGCGRGGWSYYCATLKHVQEVKGFTKGGPGHEEPQLMQSYGWNLVHMKSGVDVFHKPAEPADTVLCDIGESNPSCEVEEARTARVLDMVEEWLKKGATEFCIKVLCPYTPKIIEKLEKLQRKYGGGLVRVPLSRNSTHEMYWVSGAAGNIIHAVSMTSQVLMGRMDKQNRSGPRYEEDVNLGSGTRSVGKLTEKPDLRKVGERIRRLREEYQQTWTYDHNNPYRTWNYHGSYEVKPTGSASSMVNGVVRLLSKPWDMITNVTTMAMTDTTPFGQQRVFKEKVDTKAPEPPLGVAQIMDVTTDWLWDFVAREKKPRVCTPEEFKAKVNSHAALGAMFEEQNQWSSAREAVEDPKFWEMVDEEREAHLKGECHTCIYNMMGKREKKTGEFGKAKGSRAIWYMWLGARFLEFEALGFLNEDHWMSRENSYGGVEGKGLQKLGYILQEISQIPGGKMYADDTAGWDTRITKEDLKNEAKITKRMEERHRKLAEAIIDLTYRHKVVKVMRPGPDGKTYMDVISREDQRGSGQVVTYALNTFTNLAVQLIRCMEAEGVVDEDDITRVRLGRLAKAVEWLRKNGPERLSRMAVSGDDCVVKPIDDRFATALHFLNNMSKIRKDIQEWKPSTGWHNWQEVPFCSHHFNELMLKDGRTIVVPCRSQDELIGRARISPGAGWNVKETACLSKSYAQMWLLMYFHRRDLRMMANAICSAVPVNWVPTGRTTWSIHGKGEWMTTEDMLSVWNRVWIEENEYMKDKTPLAAWNDIPYLGKREDIWCGSLIGTRTRATWAENIYAPIMQIRNLIGEEEYRDYM.

Residues S2–N15 form an interaction with host EXOC1 region. The Cytoplasmic portion of the chain corresponds to S2 to S108. The segment at L37–V72 is hydrophobic; homodimerization of capsid protein C. Positions G104–S121 are cleaved as a propeptide — ER anchor for the capsid protein C, removed in mature form by serine protease NS3. A helical transmembrane segment spans residues L109–G129. The Extracellular portion of the chain corresponds to K130–N247. N136 is a glycosylation site (N-linked (GlcNAc...) asparagine; by host). A helical transmembrane segment spans residues W248–S268. At N269–R273 the chain is on the cytoplasmic side. Residues V274–S288 traverse the membrane as a helical segment. The Extracellular portion of the chain corresponds to F289 to L741. Cystine bridges form between C291/C318, C348/C404, C348/C409, C362/C393, C380/C404, C380/C409, C478/C576, and C593/C624. The tract at residues D386–G399 is fusion peptide. The helical transmembrane segment at F742–L762 threads the bilayer. At Q763–S768 the chain is on the cytoplasmic side. Residues I769 to A789 traverse the membrane as a helical segment. The Extracellular segment spans residues D790–D1214. 2 disulfides stabilise this stretch: C793-C804 and C844-C932. Residues N919, N964, and N996 are each glycosylated (N-linked (GlcNAc...) asparagine; by host). 6 cysteine pairs are disulfide-bonded: C968/C1012, C1069/C1118, C1080/C1101, C1080/C1102, C1101/C1105, and C1102/C1105. A helical membrane pass occupies residues V1215–F1235. At L1236–N1245 the chain is on the cytoplasmic side. A helical transmembrane segment spans residues I1246 to V1266. At L1267 to V1288 the chain is on the lumenal side. Residues A1289–M1303 form a helical membrane-spanning segment. Residue R1304 is a topological domain, cytoplasmic. Residues M1305–N1325 traverse the membrane as a helical segment. Residues E1326–L1339 lie on the Lumenal side of the membrane. A helical transmembrane segment spans residues L1340–I1360. At L1361–S1369 the chain is on the cytoplasmic side. The helical transmembrane segment at W1370–L1390 threads the bilayer. Over E1391–E1393 the chain is Lumenal. The helical transmembrane segment at E1394–S1414 threads the bilayer. Residues G1415–I1471 are Cytoplasmic-facing. The segment at I1422–A1461 is interacts with and activates NS3 protease. Residues L1472–L1492 constitute an intramembrane region (helical). Topologically, residues L1493–S2167 are cytoplasmic. In terms of domain architecture, Peptidase S7 spans G1500–A1677. Residues H1550, D1574, and S1634 each act as charge relay system; for serine protease NS3 activity in the active site. The Helicase ATP-binding domain occupies E1680 to E1836. Residues R1684–K1687 form an important for RNA-binding region. L1693–T1700 contacts ATP. The DEAH box signature appears at D1784–H1787. One can recognise a Helicase C-terminal domain in the interval G1847–E2011. The segment at A2162 to D2166 is regulates the ATPase activity of NS3 helicase. A helical transmembrane segment spans residues L2168–L2188. The Lumenal portion of the chain corresponds to M2189 to G2193. An intramembrane region (helical) is located at residues V2194–A2214. E2215 is a topological domain (lumenal). The chain crosses the membrane as a helical span at residues V2216–I2236. Over P2237–A2251 the chain is Cytoplasmic. The chain crosses the membrane as a helical span at residues V2252–A2266. Residues N2267–A2308 are Lumenal-facing. An intramembrane region (helical) is located at residues T2309–I2329. The Lumenal portion of the chain corresponds to T2330–T2376. Residues L2377–G2397 form a helical membrane-spanning segment. The Cytoplasmic portion of the chain corresponds to W2398–K2440. The helical transmembrane segment at K2441–I2461 threads the bilayer. Over C2462 to E2466 the chain is Lumenal. Residues F2467 to W2487 form a helical membrane-spanning segment. Residues N2488–M3412 lie on the Cytoplasmic side of the membrane. Residues G2525–S2790 enclose the mRNA cap 0-1 NS5-type MT domain. S2580 is a binding site for S-adenosyl-L-methionine. S2580 is subject to Phosphoserine. Catalysis depends on K2585, which acts as the For 2'-O-MTase activity. S-adenosyl-L-methionine contacts are provided by G2610, W2611, T2628, K2629, D2655, and V2656. D2670 acts as the For 2'-O-MTase activity in catalysis. Residue I2671 participates in S-adenosyl-L-methionine binding. Residues K2706 and E2742 each act as for 2'-O-MTase activity in the active site. S-adenosyl-L-methionine is bound at residue Y2744. Residues Q2771–E2780 show a composition bias toward basic and acidic residues. The segment at Q2771–V2791 is disordered. Zn(2+) contacts are provided by E2964, H2968, C2973, and C2976. The 153-residue stretch at G3054–A3206 folds into the RdRp catalytic domain. H3241, C3257, and C3376 together coordinate Zn(2+).

This sequence in the N-terminal section; belongs to the class I-like SAM-binding methyltransferase superfamily. mRNA cap 0-1 NS5-type methyltransferase family. In terms of assembly, homodimer. Interacts (via N-terminus) with host EXOC1 (via C-terminus); this interaction results in EXOC1 degradation through the proteasome degradation pathway. As to quaternary structure, forms heterodimers with envelope protein E in the endoplasmic reticulum and Golgi. Homodimer; in the endoplasmic reticulum and Golgi. Interacts with protein prM. Interacts with non-structural protein 1. In terms of assembly, homodimer; Homohexamer when secreted. Interacts with envelope protein E. NS1 interacts with NS4B. Interacts with host complement protein CFH; this interaction leads to the degradation of C3. As to quaternary structure, interacts (via N-terminus) with serine protease NS3. Forms a heterodimer with serine protease NS3. May form homooligomers. In terms of assembly, forms a heterodimer with NS2B. Interacts with non-structural protein 2A (via N-terminus). Interacts with NS4B. Interacts with unphosphorylated RNA-directed RNA polymerase NS5; this interaction stimulates RNA-directed RNA polymerase NS5 guanylyltransferase activity. As to quaternary structure, interacts with serine protease NS3. Homodimer. Interacts with host STAT2; this interaction inhibits the phosphorylation of the latter, and, when all viral proteins are present (polyprotein), targets STAT2 for degradation. Interacts with serine protease NS3. Specific enzymatic cleavages in vivo yield mature proteins. Cleavages in the lumen of endoplasmic reticulum are performed by host signal peptidase, whereas cleavages in the cytoplasmic side are performed by serine protease NS3. Signal cleavage at the 2K-4B site requires a prior NS3 protease-mediated cleavage at the 4A-2K site. In terms of processing, cleaved in post-Golgi vesicles by a host furin, releasing the mature small envelope protein M, and peptide pr. This cleavage is incomplete as up to 30% of viral particles still carry uncleaved prM. Post-translationally, N-glycosylated. N-glycosylated. The excreted form is glycosylated and this is required for efficient secretion of the protein from infected cells. In terms of processing, phosphorylated on serines residues. This phosphorylation may trigger NS5 nuclear localization.

It localises to the virion. Its subcellular location is the host nucleus. It is found in the host cytoplasm. The protein localises to the host perinuclear region. The protein resides in the secreted. It localises to the virion membrane. Its subcellular location is the host endoplasmic reticulum membrane. It catalyses the reaction Selective hydrolysis of -Xaa-Xaa-|-Yaa- bonds in which each of the Xaa can be either Arg or Lys and Yaa can be either Ser or Ala.. The enzyme catalyses RNA(n) + a ribonucleoside 5'-triphosphate = RNA(n+1) + diphosphate. It carries out the reaction a ribonucleoside 5'-triphosphate + H2O = a ribonucleoside 5'-diphosphate + phosphate + H(+). The catalysed reaction is ATP + H2O = ADP + phosphate + H(+). It catalyses the reaction a 5'-end (5'-triphosphoguanosine)-ribonucleoside in mRNA + S-adenosyl-L-methionine = a 5'-end (N(7)-methyl 5'-triphosphoguanosine)-ribonucleoside in mRNA + S-adenosyl-L-homocysteine. The enzyme catalyses a 5'-end (N(7)-methyl 5'-triphosphoguanosine)-ribonucleoside in mRNA + S-adenosyl-L-methionine = a 5'-end (N(7)-methyl 5'-triphosphoguanosine)-(2'-O-methyl-ribonucleoside) in mRNA + S-adenosyl-L-homocysteine + H(+). Its function is as follows. Plays a role in virus budding by binding to the cell membrane and gathering the viral RNA into a nucleocapsid that forms the core of a mature virus particle. During virus entry, may induce genome penetration into the host cytoplasm after hemifusion induced by the surface proteins. Can migrate to the cell nucleus where it modulates host functions. Overcomes the anti-viral effects of host EXOC1 by sequestering and degrading the latter through the proteasome degradation pathway. Inhibits RNA silencing by interfering with host Dicer. Functionally, prevents premature fusion activity of envelope proteins in trans-Golgi by binding to envelope protein E at pH6.0. After virion release in extracellular space, gets dissociated from E dimers. In terms of biological role, acts as a chaperone for envelope protein E during intracellular virion assembly by masking and inactivating envelope protein E fusion peptide. prM is the only viral peptide matured by host furin in the trans-Golgi network probably to avoid catastrophic activation of the viral fusion activity in acidic Golgi compartment prior to virion release. prM-E cleavage is inefficient, and many virions are only partially matured. These uncleaved prM would play a role in immune evasion. Its function is as follows. May play a role in virus budding. Exerts cytotoxic effects by activating a mitochondrial apoptotic pathway through M ectodomain. May display a viroporin activity. Binds to host cell surface receptor and mediates fusion between viral and cellular membranes. Envelope protein is synthesized in the endoplasmic reticulum in the form of heterodimer with protein prM. They play a role in virion budding in the ER, and the newly formed immature particle is covered with 60 spikes composed of heterodimer between precursor prM and envelope protein E. The virion is transported to the Golgi apparatus where the low pH causes dissociation of PrM-E heterodimers and formation of E homodimers. prM-E cleavage is inefficient, and many virions are only partially matured. These uncleaved prM would play a role in immune evasion. Functionally, involved in immune evasion, pathogenesis and viral replication. Once cleaved off the polyprotein, is targeted to three destinations: the viral replication cycle, the plasma membrane and the extracellular compartment. Essential for viral replication. Required for formation of the replication complex and recruitment of other non-structural proteins to the ER-derived membrane structures. Excreted as a hexameric lipoparticle that plays a role against host immune response. Antagonizing the complement function. Binds to the host macrophages and dendritic cells. Inhibits signal transduction originating from Toll-like receptor 3 (TLR3). In terms of biological role, component of the viral RNA replication complex that functions in virion assembly and antagonizes the host alpha/beta interferon antiviral response. Its function is as follows. Required cofactor for the serine protease function of NS3. May have membrane-destabilizing activity and form viroporins. Displays three enzymatic activities: serine protease, NTPase and RNA helicase. NS3 serine protease, in association with NS2B, performs its autocleavage and cleaves the polyprotein at dibasic sites in the cytoplasm: C-prM, NS2A-NS2B, NS2B-NS3, NS3-NS4A, NS4A-2K and NS4B-NS5. NS3 RNA helicase binds RNA and unwinds dsRNA in the 3' to 5' direction. Functionally, regulates the ATPase activity of the NS3 helicase activity. NS4A allows NS3 helicase to conserve energy during unwinding. In terms of biological role, functions as a signal peptide for NS4B and is required for the interferon antagonism activity of the latter. Its function is as follows. Induces the formation of ER-derived membrane vesicles where the viral replication takes place. Inhibits interferon (IFN)-induced host STAT1 phosphorylation and nuclear translocation, thereby preventing the establishment of cellular antiviral state by blocking the IFN-alpha/beta pathway. Inhibits STAT2 translocation in the nucleus after IFN-alpha treatment. Replicates the viral (+) and (-) RNA genome, and performs the capping of genomes in the cytoplasm. NS5 methylates viral RNA cap at guanine N-7 and ribose 2'-O positions. Besides its role in RNA genome replication, also prevents the establishment of cellular antiviral state by blocking the interferon-alpha/beta (IFN-alpha/beta) signaling pathway. Inhibits host TYK2 and STAT2 phosphorylation, thereby preventing activation of JAK-STAT signaling pathway. This is Genome polyprotein from Agelaius tricolor (Tricolored blackbird).